A 457-amino-acid polypeptide reads, in one-letter code: MTTDEGAKNSGESPTATVAEQGEDITSKKDRGVLKIVKRVGNGEETPMIGDKVYVHYKGKLSNGKKFNSSHDRNEPFVFSLGKSQVIKAWDIGVATMKKGEICHLLCKPEYAYGSAGSVPKIPSNATLFFEIELLDFKGEDLLEDGGIIRRTKRKGEGYSNPNEGATVEIHLEGRCGERMFDCRDVAFTVGEGEDHDIPIGIDKALEKMQREEQCILYLGPRYGFGEAGKPKFGIEPNAELIYEVTLKSFEKAKESWEMDTKEKLEQAAIVKEKGTVYFKGGKYMRAVIQYGKIVSWLEMEYGLSEKESKASESFLLAAFLNLAMCYLKLREYTKAVECCDKALGLDSANEKGLYRRGEAQLLMNEFESAKGDFEKVLEVNPQNKAARLQISMCQKKAKEHNERDRRIYANMFKKFAEQDAKEEANKAMGKKTSEGVTNEKGTDSSAVEEEKAEGHV.

M1 bears the N-acetylmethionine mark. The disordered stretch occupies residues 1 to 26; that stretch reads MTTDEGAKNSGESPTATVAEQGEDIT. A Phosphoserine modification is found at S13. K28 carries the post-translational modification N6-acetyllysine. In terms of domain architecture, PPIase FKBP-type 1 spans 50-138; the sequence is GDKVYVHYKG…FFEIELLDFK (89 aa). K155 bears the N6-acetyllysine mark. A PPIase FKBP-type 2 domain is found at 165–251; it reads GATVEIHLEG…IYEVTLKSFE (87 aa). TPR repeat units follow at residues 268–301, 317–350, and 351–384; these read AAIV…LEME, LAAF…DSAN, and EKGL…NPQN. A disordered region spans residues 421 to 457; sequence AKEEANKAMGKKTSEGVTNEKGTDSSAVEEEKAEGHV. Position 445 is a phosphoserine (S445).

In terms of assembly, part of a heteromultimeric cytoplasmic complex with HSP90AA1, HSPA1A/HSPA1B and steroid receptors. Upon ligand binding dissociates from the complex and FKBP4 takes its place. Interacts with functionally mature heterooligomeric progesterone receptor complexes along with HSP90 and TEBP. Interacts with NR3C1. Interacts with Akt/AKT1 and PHLPP1; enhancing dephosphorylation and subsequent activation of Akt/AKT1. Interacts with IFI44L; this interaction modulates the kinase activity of IKBKB and IKBKE. Interacts with IKBKB and IKBKE. Acetylation impairs ability to promote interaction between Akt/AKT1 and PHLPP1. Deacetylation by SIRT7 promotes interaction between Akt/AKT1 and PHLPP1, leading to suppress Akt/AKT1 activation. Post-translationally, ubiquitinated, leading to degradation in a proteasome-dependent manner. Deubiquitinated by USP49, leading to stabilization.

It localises to the cytoplasm. The protein resides in the nucleus. The catalysed reaction is [protein]-peptidylproline (omega=180) = [protein]-peptidylproline (omega=0). Inhibited by both FK506 and rapamycin. Immunophilin protein with PPIase and co-chaperone activities. Component of unligated steroid receptors heterocomplexes through interaction with heat-shock protein 90 (HSP90). Plays a role in the intracellular trafficking of heterooligomeric forms of steroid hormone receptors maintaining the complex into the cytoplasm when unliganded. Acts as a regulator of Akt/AKT1 activity by promoting the interaction between Akt/AKT1 and PHLPP1, thereby enhancing dephosphorylation and subsequent activation of Akt/AKT1. Interacts with IKBKE and IKBKB which facilitates IKK complex assembly leading to increased IKBKE and IKBKB kinase activity, NF-kappaB activation, and IFN production. This chain is Peptidyl-prolyl cis-trans isomerase FKBP5 (FKBP5), found in Chlorocebus aethiops (Green monkey).